Consider the following 904-residue polypeptide: Copper-transporting ATPase ccc2 (904 aa).

Residues 1 to 172 (MYTTTLSVQG…GSQIRVWKIR (172 aa)) are Cytoplasmic-facing. The HMA domain occupies 2–68 (YTTTLSVQGM…KIEDCGFDAS (67 aa)). 2 residues coordinate Cu(+): C13 and C16. The helical transmembrane segment at 173–193 (FIISISFSLAVMFLPQIFDSC) threads the bilayer. The Lumenal, vesicle segment spans residues 194–197 (DSMR). The chain crosses the membrane as a helical span at residues 198-218 (AAFLVPHYFGICAGHIISLVL). Residues 219–246 (SLPVQFGVGRVYYSAAYHALKRGTANMD) are Cytoplasmic-facing. A helical membrane pass occupies residues 247–267 (VLVSLGSTVAFAASIFFMILY). The Lumenal, vesicle segment spans residues 268–278 (SARHADNPAPI). Residues 279–296 (FFDTADMLLTFVTLGRYL) traverse the membrane as a helical segment. Residues 297–431 (ESKAKGSTSA…PIQQFADRVA (135 aa)) are Cytoplasmic-facing. A helical membrane pass occupies residues 432-452 (GIFVPVIVALSISTFTFWFLF). The Lumenal, vesicle portion of the chain corresponds to 453 to 469 (TKYSSKYPSVFDDPMGK). A helical transmembrane segment spans residues 470-490 (FAVCLKLTISVVVVACPCALG). Residues 491–805 (LSTPTAVMVG…RIKMNLVWAC (315 aa)) lie on the Cytoplasmic side of the membrane. The 4-aspartylphosphate intermediate role is filled by D529. The Mg(2+) site is built by D742 and D746. A helical transmembrane segment spans residues 806 to 826 (IYNFVMIPIAMGFFLPWGIYL). Over 827-828 (NP) the chain is Lumenal, vesicle. A helical transmembrane segment spans residues 829 to 849 (MWASAAMMFSSLSVLASSLLL). Over 850 to 904 (RRWKKPKSLIFSEADDVETESSTNSSVLQKVYTATRSIFGRNKSSNKYQPVANEV) the chain is Cytoplasmic.

Belongs to the cation transport ATPase (P-type) (TC 3.A.3) family. Type IB subfamily.

It is found in the golgi apparatus. The protein localises to the trans-Golgi network membrane. It carries out the reaction Cu(+)(in) + ATP + H2O = Cu(+)(out) + ADP + phosphate + H(+). Its function is as follows. Probably involved in copper transport and in the regulation of cellular copper level. Retrieves copper from the metallochaperone atx1 and incorporates it into trans-Golgi vesicles. The polypeptide is Copper-transporting ATPase ccc2 (ccc2) (Schizosaccharomyces pombe (strain 972 / ATCC 24843) (Fission yeast)).